Here is a 77-residue protein sequence, read N- to C-terminus: Protein OPG128 (77 aa).

It belongs to the orthopoxvirus OPG128 family. In terms of assembly, interacts with sulfhydryl oxidase OPG072; this interaction involves formation of a transient disulfide-bonded intermediate, allowing disulfide bond transfer. Interacts with OPG088; this interaction involves formation of a transient disulfide-bonded intermediate, allowing disulfide bond transfer.

Late protein which probably participates in disulfide bond formation by functioning as a thiol-disulfide transfer protein between membrane-associated OPG072 and OPG08. The complete pathway for formation of disulfide bonds in intracellular virion membrane proteins sequentially involves oxidation of OPG072, OPG128 and OPG08. This chain is Protein OPG128 (OPG128), found in Monkeypox virus.